The following is a 415-amino-acid chain: Probable cytosolic iron-sulfur protein assembly protein 1 (415 aa).

Residues 9 to 48 form a WD 1 repeat; sequence AHDDKVWSLSSHPTLPLLATASTDKCSNIYRLSCSNASSS. Positions 45–70 are disordered; sequence ASSSSSSSSPPSPPSPPSSSSPRRNF. Over residues 54 to 63 the composition is skewed to pro residues; that stretch reads PPSPPSPPSS. 6 WD repeats span residues 79-131, 160-200, 207-246, 253-300, 335-374, and 380-415; these read THRR…DDNT, GHEN…EEFE, DHTQ…DEWS, GHEG…GFNG, IHTH…WEVE, and AHGV…IWEV.

Belongs to the WD repeat CIA1 family. In terms of assembly, interacts with NAR1.

It localises to the cytoplasm. The protein localises to the nucleus. Functionally, essential component of the cytosolic iron-sulfur (Fe/S) protein assembly machinery. Required for the maturation of extramitochondrial Fe/S proteins. The sequence is that of Probable cytosolic iron-sulfur protein assembly protein 1 from Lodderomyces elongisporus (strain ATCC 11503 / CBS 2605 / JCM 1781 / NBRC 1676 / NRRL YB-4239) (Yeast).